The following is a 315-amino-acid chain: N-acetyl-gamma-glutamyl-phosphate reductase (315 aa).

C117 is an active-site residue.

This sequence belongs to the NAGSA dehydrogenase family. Type 2 subfamily.

Its subcellular location is the cytoplasm. The catalysed reaction is N-acetyl-L-glutamate 5-semialdehyde + phosphate + NADP(+) = N-acetyl-L-glutamyl 5-phosphate + NADPH + H(+). It participates in amino-acid biosynthesis; L-arginine biosynthesis; N(2)-acetyl-L-ornithine from L-glutamate: step 3/4. Catalyzes the NADPH-dependent reduction of N-acetyl-5-glutamyl phosphate to yield N-acetyl-L-glutamate 5-semialdehyde. This chain is N-acetyl-gamma-glutamyl-phosphate reductase, found in Burkholderia lata (strain ATCC 17760 / DSM 23089 / LMG 22485 / NCIMB 9086 / R18194 / 383).